A 351-amino-acid polypeptide reads, in one-letter code: Peroxisomal membrane protein PEX14 (351 aa).

The tract at residues 54 to 75 (KARTGTVQASPSQQSVVPPRPP) is disordered. Low complexity predominate over residues 60-70 (VQASPSQQSVV). An SH3-binding motif is present at residues 83-91 (APPLPERDW). Residues 243–351 (APQLSTPPSE…RGIPAWQLNA (109 aa)) form a disordered region. Over residues 245–258 (QLSTPPSESTSRQS) the composition is skewed to polar residues. Positions 283-293 (VLSREKDKDVN) are enriched in basic and acidic residues. Positions 294 to 303 (SDSIAQYEQR) are enriched in polar residues. Low complexity predominate over residues 320 to 334 (SASNGGSSTTSGVAG).

It belongs to the peroxin-14 family. In terms of assembly, interacts with PEX13 (via SH3 domain); forming the PEX13-PEX14 docking complex. Interacts with PEX5 (via WxxxF/Y motifs).

It is found in the peroxisome membrane. Its function is as follows. Component of the PEX13-PEX14 docking complex, a translocon channel that specifically mediates the import of peroxisomal cargo proteins bound to PEX5 receptor. The PEX13-PEX14 docking complex forms a large import pore which can be opened to a diameter of about 9 nm. Mechanistically, PEX5 receptor along with cargo proteins associates with the PEX14 subunit of the PEX13-PEX14 docking complex in the cytosol, leading to the insertion of the receptor into the organelle membrane with the concomitant translocation of the cargo into the peroxisome matrix. This chain is Peroxisomal membrane protein PEX14, found in Pichia angusta (Yeast).